We begin with the raw amino-acid sequence, 937 residues long: Isoleucine--tRNA ligase (937 aa).

Residues 58–68 (PYANGTLHLGH) carry the 'HIGH' region motif. An L-isoleucyl-5'-AMP-binding site is contributed by E561. Residues 602–606 (KMSKS) carry the 'KMSKS' region motif. Residue K605 coordinates ATP. Zn(2+) is bound by residues C900, C903, C920, and C923.

Belongs to the class-I aminoacyl-tRNA synthetase family. IleS type 1 subfamily. In terms of assembly, monomer. It depends on Zn(2+) as a cofactor.

It localises to the cytoplasm. The catalysed reaction is tRNA(Ile) + L-isoleucine + ATP = L-isoleucyl-tRNA(Ile) + AMP + diphosphate. Functionally, catalyzes the attachment of isoleucine to tRNA(Ile). As IleRS can inadvertently accommodate and process structurally similar amino acids such as valine, to avoid such errors it has two additional distinct tRNA(Ile)-dependent editing activities. One activity is designated as 'pretransfer' editing and involves the hydrolysis of activated Val-AMP. The other activity is designated 'posttransfer' editing and involves deacylation of mischarged Val-tRNA(Ile). The chain is Isoleucine--tRNA ligase from Histophilus somni (strain 2336) (Haemophilus somnus).